The sequence spans 748 residues: Rho GTPase-activating protein 24 (748 aa).

Residues 1 to 20 (MEENNDSTENPQQGQGRQNA) are disordered. Polar residues predominate over residues 7–18 (STENPQQGQGRQ). Residues 19 to 125 (NAIKCGWLRK…WVKSIRRVIW (107 aa)) enclose the PH domain. The region spanning 135–329 (QKLEDTVRYE…VMISKHDCLF (195 aa)) is the Rho-GAP domain. Disordered stretches follow at residues 354-476 (TMGQ…GTHS) and 582-641 (DFFG…SSNH). Composition is skewed to polar residues over residues 356 to 374 (GQLQ…SRQC) and 382 to 405 (PQRS…SPKN). Phosphoserine is present on residues serine 369, serine 391, serine 396, serine 398, serine 402, serine 413, serine 415, and serine 437. The span at 432 to 476 (IVTNGSFSSSNAEGLEKTQTTPNGSLQARRSSSLKVSGTKMGTHS) shows a compositional bias: polar residues. Threonine 452 is subject to Phosphothreonine. The span at 600–615 (DLSHPRDYESKSDHRS) shows a compositional bias: basic and acidic residues. The segment covering 617-641 (GGRSSRATSSSDNSETFVGNSSSNH) has biased composition (low complexity). Residues 649–729 (SSLKQEMTKQ…KEMEQFFSTF (81 aa)) adopt a coiled-coil conformation.

In terms of assembly, interacts with FLNA. Post-translationally, phosphorylated by ROCK, leading to activate the RacGAP activity. Isoform 1 is widely expressed with a higher level in kidney. Isoform 2 is mainly expressed in endothelial cells.

The protein localises to the cytoplasm. The protein resides in the cytoskeleton. Its subcellular location is the cell junction. It localises to the adherens junction. It is found in the focal adhesion. The protein localises to the cell projection. Functionally, rho GTPase-activating protein involved in cell polarity, cell morphology and cytoskeletal organization. Acts as a GTPase activator for the Rac-type GTPase by converting it to an inactive GDP-bound state. Controls actin remodeling by inactivating Rac downstream of Rho leading to suppress leading edge protrusion and promotes cell retraction to achieve cellular polarity. Able to suppress RAC1 and CDC42 activity in vitro. Overexpression induces cell rounding with partial or complete disruption of actin stress fibers and formation of membrane ruffles, lamellipodia, and filopodia. Isoform 2 is a vascular cell-specific GAP involved in modulation of angiogenesis. The chain is Rho GTPase-activating protein 24 (ARHGAP24) from Homo sapiens (Human).